The chain runs to 20 residues: 26 kDa protein (20 aa).

This is 26 kDa protein from Bacillus cereus.